A 436-amino-acid polypeptide reads, in one-letter code: Homeobox protein PKNOX1 (436 aa).

Positions 23 to 50 (ELKTEQDPNCSDPDAEGVSPPPIESQTP) are disordered. Residues S33 and S41 each carry the phosphoserine modification. In terms of domain architecture, MEIS N-terminal spans 80–163 (GSEGTTSASF…MNSETLLSGE (84 aa)). A DNA-binding region (homeobox; TALE-type) is located at residues 259–321 (SKNKRGVLPK…NARRRILQPM (63 aa)). Positions 401 to 436 (AGQSEDESVDSTEDEGGALAPTHISGLVLENSDSLQ) are disordered. A compositionally biased stretch (acidic residues) spans 404–416 (SEDESVDSTEDEG).

Belongs to the TALE/MEIS homeobox family. In terms of assembly, interacts with MN1.

The protein resides in the nucleus. In terms of biological role, activates transcription in the presence of PBX1A and HOXA1. (Microbial infection) In complex with PBX1, binds to the 5'-TGATTGAC-3' consensus sequence in the U5 region of Moloney murine leukemia virus and promotes viral transcription. The chain is Homeobox protein PKNOX1 from Mus musculus (Mouse).